We begin with the raw amino-acid sequence, 95 residues long: Aspartyl/glutamyl-tRNA(Asn/Gln) amidotransferase subunit C (95 aa).

The protein belongs to the GatC family. Heterotrimer of A, B and C subunits.

The enzyme catalyses L-glutamyl-tRNA(Gln) + L-glutamine + ATP + H2O = L-glutaminyl-tRNA(Gln) + L-glutamate + ADP + phosphate + H(+). It carries out the reaction L-aspartyl-tRNA(Asn) + L-glutamine + ATP + H2O = L-asparaginyl-tRNA(Asn) + L-glutamate + ADP + phosphate + 2 H(+). Allows the formation of correctly charged Asn-tRNA(Asn) or Gln-tRNA(Gln) through the transamidation of misacylated Asp-tRNA(Asn) or Glu-tRNA(Gln) in organisms which lack either or both of asparaginyl-tRNA or glutaminyl-tRNA synthetases. The reaction takes place in the presence of glutamine and ATP through an activated phospho-Asp-tRNA(Asn) or phospho-Glu-tRNA(Gln). The protein is Aspartyl/glutamyl-tRNA(Asn/Gln) amidotransferase subunit C of Azotobacter vinelandii (strain DJ / ATCC BAA-1303).